Here is a 526-residue protein sequence, read N- to C-terminus: GMP synthase [glutamine-hydrolyzing] (526 aa).

A Glutamine amidotransferase type-1 domain is found at Ser14–Asp208. Residue Cys91 is the Nucleophile of the active site. Catalysis depends on residues His182 and Glu184. In terms of domain architecture, GMPS ATP-PPase spans Trp209–Arg401. ATP is bound at residue Ser236–Ser242.

In terms of assembly, homodimer.

It carries out the reaction XMP + L-glutamine + ATP + H2O = GMP + L-glutamate + AMP + diphosphate + 2 H(+). It functions in the pathway purine metabolism; GMP biosynthesis; GMP from XMP (L-Gln route): step 1/1. Functionally, catalyzes the synthesis of GMP from XMP. This Zymomonas mobilis subsp. mobilis (strain ATCC 31821 / ZM4 / CP4) protein is GMP synthase [glutamine-hydrolyzing].